A 99-amino-acid chain; its full sequence is MLDQTLTSEALVTTVTHAQTHQPVQRPLRDSVQQALRNYLAQLNGQDVAELYDMVLSEVEAPMLDIIMQYTRGNQTRAAIMMGINRGTLRKKLKKYGMN.

The H-T-H motif DNA-binding region spans 75-94 (QTRAAIMMGINRGTLRKKLK).

It belongs to the transcriptional regulatory Fis family. As to quaternary structure, homodimer.

Activates ribosomal RNA transcription. Plays a direct role in upstream activation of rRNA promoters. In Tolumonas auensis (strain DSM 9187 / NBRC 110442 / TA 4), this protein is DNA-binding protein Fis.